Consider the following 358-residue polypeptide: MKLLFPILLLTGSYFLSACNNTQSLMSSTHTIAASDPHIQVMGRTHINDDASLTFGYPGVSLSTIVAGSRLTAEMQSSNGNSWIDVIIDNHPPTSIKLDAQQQTVELFHFPNSGEHRVEIIHRSENWHGQVTLKQLTLTGTQFLPAPVLPQRKILVLGDSVTCGEAIDRVAGEDKNTRWWNARESYGMLTAKALDAQVQLVCWGGRGLIRSWNGKTDDANLPDFYQFTLGDTGQAPQWDHHRYQPDLIISAIGTNDFSPGIPDRATYINTYTRFVRTLLDNHPQATIVLTEGAILNGDKKAALVSYIGETRQQLHSNRVFYASSSHHPGDNSDAHPTKDQHAAMARELTPQLRQIMDW.

Positions 1-18 (MKLLFPILLLTGSYFLSA) are cleaved as a signal peptide. Cysteine 19 carries the N-palmitoyl cysteine lipid modification. A lipid anchor (S-diacylglycerol cysteine) is attached at cysteine 19. The Nucleophile role is filled by serine 160. Active-site charge relay system residues include aspartate 333 and histidine 335.

It belongs to the carbohydrate esterase 2 (CE2) family.

The protein resides in the cell membrane. The catalysed reaction is Deacetylation of xylans and xylo-oligosaccharides.. Its pathway is glycan degradation; xylan degradation. Functionally, involved in the degradation of plant cell wall polysaccharides. Catalyzes the deacetylation of acetylated birchwood xylan and glucomannan, with equal efficiency, and of the synthetic substrate 4-nitrophenyl acetate (4-NPAc). Does not bind cellulose, cellohexaose and beta-glucan. The sequence is that of Acetylxylan esterase / glucomannan deacetylase from Cellvibrio japonicus (strain Ueda107) (Pseudomonas fluorescens subsp. cellulosa).